We begin with the raw amino-acid sequence, 170 residues long: Peptide deformylase (170 aa).

Residues Cys91 and His133 each contribute to the Fe cation site. Glu134 is a catalytic residue. Fe cation is bound at residue His137.

Belongs to the polypeptide deformylase family. Requires Fe(2+) as cofactor.

It carries out the reaction N-terminal N-formyl-L-methionyl-[peptide] + H2O = N-terminal L-methionyl-[peptide] + formate. Functionally, removes the formyl group from the N-terminal Met of newly synthesized proteins. Requires at least a dipeptide for an efficient rate of reaction. N-terminal L-methionine is a prerequisite for activity but the enzyme has broad specificity at other positions. This Actinobacillus pleuropneumoniae serotype 7 (strain AP76) protein is Peptide deformylase.